The chain runs to 293 residues: Single-pass membrane and coiled-coil domain-containing protein 2 (293 aa).

Residues 116–188 (KNLLEFLLKD…SAKLRMYQME (73 aa)) are a coiled coil. Residues 234-254 (IFIMFYVLTVTGLLCYILFFG) form a helical membrane-spanning segment.

The protein resides in the membrane. The chain is Single-pass membrane and coiled-coil domain-containing protein 2 (SMCO2) from Macaca fascicularis (Crab-eating macaque).